A 391-amino-acid chain; its full sequence is Pectin acetylesterase 7 (391 aa).

The signal sequence occupies residues 1 to 23 (MGRLKQCWSSLLVLAVLVIGTGA). Active-site charge relay system residues include Ser-171, Asp-267, and His-334.

The protein belongs to the pectinacetylesterase family.

Its subcellular location is the secreted. The protein resides in the cell wall. In terms of biological role, hydrolyzes acetyl esters in homogalacturonan regions of pectin. In type I primary cell wall, galacturonic acid residues of pectin can be acetylated at the O-2 and O-3 positions. Decreasing the degree of acetylation of pectin gels in vitro alters their physical properties. This Arabidopsis thaliana (Mouse-ear cress) protein is Pectin acetylesterase 7.